The chain runs to 288 residues: Bifunctional protein FolD (288 aa).

Residues 165 to 167 (GRS), serine 190, and isoleucine 231 contribute to the NADP(+) site.

It belongs to the tetrahydrofolate dehydrogenase/cyclohydrolase family. As to quaternary structure, homodimer.

It carries out the reaction (6R)-5,10-methylene-5,6,7,8-tetrahydrofolate + NADP(+) = (6R)-5,10-methenyltetrahydrofolate + NADPH. The catalysed reaction is (6R)-5,10-methenyltetrahydrofolate + H2O = (6R)-10-formyltetrahydrofolate + H(+). It functions in the pathway one-carbon metabolism; tetrahydrofolate interconversion. Catalyzes the oxidation of 5,10-methylenetetrahydrofolate to 5,10-methenyltetrahydrofolate and then the hydrolysis of 5,10-methenyltetrahydrofolate to 10-formyltetrahydrofolate. The sequence is that of Bifunctional protein FolD from Nitrosospira multiformis (strain ATCC 25196 / NCIMB 11849 / C 71).